Here is a 242-residue protein sequence, read N- to C-terminus: Leucyl/phenylalanyl-tRNA--protein transferase (242 aa).

The protein belongs to the L/F-transferase family.

Its subcellular location is the cytoplasm. It carries out the reaction N-terminal L-lysyl-[protein] + L-leucyl-tRNA(Leu) = N-terminal L-leucyl-L-lysyl-[protein] + tRNA(Leu) + H(+). The catalysed reaction is N-terminal L-arginyl-[protein] + L-leucyl-tRNA(Leu) = N-terminal L-leucyl-L-arginyl-[protein] + tRNA(Leu) + H(+). It catalyses the reaction L-phenylalanyl-tRNA(Phe) + an N-terminal L-alpha-aminoacyl-[protein] = an N-terminal L-phenylalanyl-L-alpha-aminoacyl-[protein] + tRNA(Phe). Functions in the N-end rule pathway of protein degradation where it conjugates Leu, Phe and, less efficiently, Met from aminoacyl-tRNAs to the N-termini of proteins containing an N-terminal arginine or lysine. The polypeptide is Leucyl/phenylalanyl-tRNA--protein transferase (Edwardsiella ictaluri (strain 93-146)).